A 416-amino-acid chain; its full sequence is Probable glucan 1,3-beta-glucosidase A (416 aa).

Residues 1 to 22 (MIFKFSQKALVALYLVVGLAEA) form the signal peptide. Catalysis depends on Glu211, which acts as the Proton donor. 2 disulfides stabilise this stretch: Cys291-Cys415 and Cys316-Cys342. Glu308 acts as the Nucleophile in catalysis. Asn344 carries N-linked (GlcNAc...) asparagine glycosylation.

It belongs to the glycosyl hydrolase 5 (cellulase A) family. Monomer. Mn(2+) is required as a cofactor.

The protein resides in the secreted. It carries out the reaction Successive hydrolysis of beta-D-glucose units from the non-reducing ends of (1-&gt;3)-beta-D-glucans, releasing alpha-glucose.. Its function is as follows. Beta-glucanases participate in the metabolism of beta-glucan, the main structural component of the cell wall. It could also function biosynthetically as a transglycosylase. The polypeptide is Probable glucan 1,3-beta-glucosidase A (exgA) (Aspergillus fumigatus (strain CBS 144.89 / FGSC A1163 / CEA10) (Neosartorya fumigata)).